Here is a 431-residue protein sequence, read N- to C-terminus: Histidinol dehydrogenase (431 aa).

Residues Tyr127, Gln185, and Asn208 each coordinate NAD(+). Substrate-binding residues include Ser234, Gln256, and His259. Residues Gln256 and His259 each contribute to the Zn(2+) site. Catalysis depends on proton acceptor residues Glu323 and His324. Residues His324, Asp357, Glu411, and His416 each coordinate substrate. Zn(2+) is bound at residue Asp357. A Zn(2+)-binding site is contributed by His416.

The protein belongs to the histidinol dehydrogenase family. Zn(2+) is required as a cofactor.

It carries out the reaction L-histidinol + 2 NAD(+) + H2O = L-histidine + 2 NADH + 3 H(+). It participates in amino-acid biosynthesis; L-histidine biosynthesis; L-histidine from 5-phospho-alpha-D-ribose 1-diphosphate: step 9/9. Functionally, catalyzes the sequential NAD-dependent oxidations of L-histidinol to L-histidinaldehyde and then to L-histidine. This Vibrio vulnificus (strain CMCP6) protein is Histidinol dehydrogenase.